The sequence spans 109 residues: uncharacterized protein (109 aa).

A helical transmembrane segment spans residues 90-107; that stretch reads IICNFWGSLLGVGIAFYQ.

It is found in the membrane. This is an uncharacterized protein from Saccharomyces cerevisiae (strain ATCC 204508 / S288c) (Baker's yeast).